The primary structure comprises 267 residues: Ribosomal RNA small subunit methyltransferase A (267 aa).

S-adenosyl-L-methionine-binding residues include Asn13, Leu15, Gly39, Glu59, Asp87, and Asn106.

It belongs to the class I-like SAM-binding methyltransferase superfamily. rRNA adenine N(6)-methyltransferase family. RsmA subfamily.

The protein localises to the cytoplasm. The catalysed reaction is adenosine(1518)/adenosine(1519) in 16S rRNA + 4 S-adenosyl-L-methionine = N(6)-dimethyladenosine(1518)/N(6)-dimethyladenosine(1519) in 16S rRNA + 4 S-adenosyl-L-homocysteine + 4 H(+). Functionally, specifically dimethylates two adjacent adenosines (A1518 and A1519) in the loop of a conserved hairpin near the 3'-end of 16S rRNA in the 30S particle. May play a critical role in biogenesis of 30S subunits. The sequence is that of Ribosomal RNA small subunit methyltransferase A from Sulfurimonas denitrificans (strain ATCC 33889 / DSM 1251) (Thiomicrospira denitrificans (strain ATCC 33889 / DSM 1251)).